We begin with the raw amino-acid sequence, 233 residues long: uncharacterized protein (233 aa).

The protein belongs to the asfivirus H233R family.

This is an uncharacterized protein from Ornithodoros (relapsing fever ticks).